Here is a 289-residue protein sequence, read N- to C-terminus: (+)-kolavelool synthase (289 aa).

Belongs to the diterpene synthase family.

It carries out the reaction (+)-kolavenyl diphosphate + H2O = (+)-kolavelool + diphosphate. In terms of biological role, involved in the biosynthesis of (+)-O-methylkolavelool. Catalyzes the biosynthesis of (+)-kolavelool from (+)-kolavenyl diphosphate via the release of the diphosphate moiety through the nucleophilic addition of a water molecule. The sequence is that of (+)-kolavelool synthase from Herpetosiphon aurantiacus (strain ATCC 23779 / DSM 785 / 114-95).